The primary structure comprises 110 residues: Phosphoribosyl-ATP pyrophosphatase (110 aa).

Belongs to the PRA-PH family.

The protein resides in the cytoplasm. It catalyses the reaction 1-(5-phospho-beta-D-ribosyl)-ATP + H2O = 1-(5-phospho-beta-D-ribosyl)-5'-AMP + diphosphate + H(+). It functions in the pathway amino-acid biosynthesis; L-histidine biosynthesis; L-histidine from 5-phospho-alpha-D-ribose 1-diphosphate: step 2/9. This chain is Phosphoribosyl-ATP pyrophosphatase (hisE), found in Clostridium acetobutylicum (strain ATCC 824 / DSM 792 / JCM 1419 / IAM 19013 / LMG 5710 / NBRC 13948 / NRRL B-527 / VKM B-1787 / 2291 / W).